The primary structure comprises 311 residues: Homeobox protein CDX-2 (311 aa).

Ser-60 carries the post-translational modification Phosphoserine. Residues 111–151 (EYHAHHHPHHHPHHPAASPSCASGLLQTLNLGPPGPAATAA) form a disordered region. The span at 114–124 (AHHHPHHHPHH) shows a compositional bias: basic residues. The interaction with DNA stretch occupies residues 185–215 (KDKYRVVYTDHQRLELEKEFHFSRYITIRRK). Residues 185–244 (KDKYRVVYTDHQRLELEKEFHFSRYITIRRKSELAATLGLSERQVKIWFQNRRAKERKIK) constitute a DNA-binding region (homeobox). The segment at 227 to 241 (RQVKIWFQNRRAKER) is interaction with 5-mCpG DNA. Residues 239–311 (KERKIKKKQQ…GGVLNSTVTQ (73 aa)) form a disordered region. Over residues 248–257 (QQQQQQQQQQ) the composition is skewed to low complexity. Residues 258–268 (PPQPPPQPSQP) are compositionally biased toward pro residues. The residue at position 281 (Ser-281) is a Phosphoserine; by CDK2. A 4S motif; modulates transactivation activity and protein stability motif is present at residues 281–293 (SPVTSLQGSVPGS). Positions 285-298 (SLQGSVPGSVPGVL) are enriched in low complexity.

It belongs to the Caudal homeobox family. As to quaternary structure, can bind DNA as a monomer or homodimer. Post-translationally, ubiquitinated, leading to its degradation by the proteasome. Phosphorylation at Ser-60 reduces transactivation capacity. Phosphorylation at Ser-281 reduces transactivation capacity and increases ubiquitin-dependent proteasome degradation. As to expression, in the intestine, detected in ileum and proximal and distal colon (at protein level). In adult small intestine, predominantly localized in crypt and lower villus cells of the epithelium (at protein level). Expressed in the intestine but not detected in other tissues including stomach, liver, kidney, spleen, brain, heart, lung, pancreas, skeletal muscle and testis. Expressed specifically in gut epithelium where it is not restricted to a particular cell lineage. Abundant expression is seen in the proximal colon with slightly lower levels in distal colon. Expression in the proximal colon is not restricted either to a particular cell lineage or stage of differentiation while in the distal colon it is more abundant in the differentiated cells towards the top of the crypt.

It localises to the nucleus. Transcription factor which regulates the transcription of multiple genes expressed in the intestinal epithelium. Binds to the promoter of the intestinal sucrase-isomaltase SI and activates SI transcription. Binds to the DNA sequence 5'-ATAAAAACTTAT-3' in the promoter region of VDR and activates VDR transcription. Binds to and activates transcription of LPH. Activates transcription of CLDN2 and intestinal mucin MUC2. Binds to the 5'-AATTTTTTACAACACCT-3' DNA sequence in the promoter region of CA1 and activates CA1 transcription. Important in broad range of functions from early differentiation to maintenance of the intestinal epithelial lining of both the small and large intestine. Binds preferentially to methylated DNA. The protein is Homeobox protein CDX-2 (Cdx2) of Mus musculus (Mouse).